We begin with the raw amino-acid sequence, 183 residues long: MASSMISSGTVATVSADRPAPAQARMVAPFTGLKSSSASPVTRKSNDITSIASNGGRVQCMQVWPPLGLKKFETLSYLPPLSTESLAKEVDYLLRKNWVPCLEFELEHGFVYRENHRSPGYYDGRYWTMWKLPMFGCTDSSQVLKELEEAKKAYPQSFIRIIGFDNVRQVQCISFIAYKPAGF.

The N-terminal 59 residues, Met-1 to Gln-59, are a transit peptide targeting the chloroplast.

This sequence belongs to the RuBisCO small chain family. As to quaternary structure, heterohexadecamer of 8 large and 8 small subunits.

The protein resides in the plastid. It localises to the chloroplast. Functionally, ruBisCO catalyzes two reactions: the carboxylation of D-ribulose 1,5-bisphosphate, the primary event in carbon dioxide fixation, as well as the oxidative fragmentation of the pentose substrate. Both reactions occur simultaneously and in competition at the same active site. Although the small subunit is not catalytic it is essential for maximal activity. The protein is Ribulose bisphosphate carboxylase small subunit, chloroplastic of Malus sp. (Crab apple).